Here is a 453-residue protein sequence, read N- to C-terminus: Phosphoglucosamine mutase (453 aa).

Ser-102 serves as the catalytic Phosphoserine intermediate. Mg(2+) contacts are provided by Ser-102, Asp-244, Asp-246, and Asp-248. Residue Ser-102 is modified to Phosphoserine.

Belongs to the phosphohexose mutase family. The cofactor is Mg(2+). Post-translationally, activated by phosphorylation.

It catalyses the reaction alpha-D-glucosamine 1-phosphate = D-glucosamine 6-phosphate. In terms of biological role, catalyzes the conversion of glucosamine-6-phosphate to glucosamine-1-phosphate. The polypeptide is Phosphoglucosamine mutase (Pelobacter propionicus (strain DSM 2379 / NBRC 103807 / OttBd1)).